The sequence spans 184 residues: Ribosome-recycling factor (184 aa).

This sequence belongs to the RRF family.

It localises to the cytoplasm. Responsible for the release of ribosomes from messenger RNA at the termination of protein biosynthesis. May increase the efficiency of translation by recycling ribosomes from one round of translation to another. This Onion yellows phytoplasma (strain OY-M) protein is Ribosome-recycling factor.